Reading from the N-terminus, the 260-residue chain is NAD-capped RNA hydrolase NudC (260 aa).

A substrate-binding site is contributed by R69. C98 and C101 together coordinate Zn(2+). Position 111 (E111) interacts with substrate. The Zn(2+) site is built by C116 and C119. Y124 is a binding site for substrate. The 124-residue stretch at 125–248 (PQIAPCIIVA…TVARRLIEDT (124 aa)) folds into the Nudix hydrolase domain. Residues A158, E174, and E178 each contribute to the a divalent metal cation site. The Nudix box motif lies at 159 to 180 (GFVEVGETLEQTVVREVMEESQ). 192–199 (QPWPFPHS) serves as a coordination point for substrate. An a divalent metal cation-binding site is contributed by E219. Residue A241 participates in substrate binding.

Belongs to the Nudix hydrolase family. NudC subfamily. Homodimer. Mg(2+) is required as a cofactor. Mn(2+) serves as cofactor. It depends on Zn(2+) as a cofactor.

The catalysed reaction is a 5'-end NAD(+)-phospho-ribonucleoside in mRNA + H2O = a 5'-end phospho-adenosine-phospho-ribonucleoside in mRNA + beta-nicotinamide D-ribonucleotide + 2 H(+). It carries out the reaction NAD(+) + H2O = beta-nicotinamide D-ribonucleotide + AMP + 2 H(+). It catalyses the reaction NADH + H2O = reduced beta-nicotinamide D-ribonucleotide + AMP + 2 H(+). Functionally, mRNA decapping enzyme that specifically removes the nicotinamide adenine dinucleotide (NAD) cap from a subset of mRNAs by hydrolyzing the diphosphate linkage to produce nicotinamide mononucleotide (NMN) and 5' monophosphate mRNA. The NAD-cap is present at the 5'-end of some mRNAs and stabilizes RNA against 5'-processing. Has preference for mRNAs with a 5'-end purine. Catalyzes the hydrolysis of a broad range of dinucleotide pyrophosphates. This is NAD-capped RNA hydrolase NudC from Pectobacterium atrosepticum (strain SCRI 1043 / ATCC BAA-672) (Erwinia carotovora subsp. atroseptica).